We begin with the raw amino-acid sequence, 710 residues long: Probable inactive DNA (cytosine-5)-methyltransferase DRM3 (710 aa).

The disordered stretch occupies residues 1-21; sequence MADMRRRNGSGGSSNHERNEQ. A UBA 1 domain is found at 52-92; sequence SGSNVKSLLIEMGFCPTLVQKAIDENGQDDFELLLEILTKS. The span at 167–184 shows a compositional bias: acidic residues; that stretch reads ESEDSLDGAEINEEDEDV. The interval 167–192 is disordered; that stretch reads ESEDSLDGAEINEEDEDVTPVTARGP. One can recognise a UBA 2 domain in the interval 198-242; sequence QLFETMDKTLRLLEMGFSNDEISMAIEKIGTKGQISVLAESIVTG. The segment at 282–360 is disordered; the sequence is AQKEDGGGGS…MGDSSSFMET (79 aa). The span at 339–350 shows a compositional bias: basic and acidic residues; sequence YDDRGKRLRPED. The SAM-dependent MTase DRM-type domain occupies 379 to 710; it reads QPRLSQSLGP…RVTKRVRDMM (332 aa).

It belongs to the class I-like SAM-binding methyltransferase superfamily. DRM-methyltransferase family. Interacts with Pol V.

It is found in the nucleus. Functionally, catalytically inactive DNA methyltransferase that acts as regulatory factor for DRM2-mediated DNA methylation. Required for maintenance of non-CpG DNA methylation. Required for normal establishment and maintenance of RNA-directed DNA methylation (RdDM) and accumulation of specific repeat-associated small interfering RNAs (siRNAs). Required for nucleolus organizer region (NOR) nuclear organization during interphase. Acts downstream of the production of siRNAs. May promote RNA polymerase V (Pol V) transcriptional elongation or assist in the stabilization of Pol V transcripts. In Arabidopsis thaliana (Mouse-ear cress), this protein is Probable inactive DNA (cytosine-5)-methyltransferase DRM3.